The sequence spans 205 residues: Quinone-oxidoreductase QR2 (205 aa).

Residues 5 to 192 (VYIVYYSTYG…LKQAFHQGMY (188 aa)) form the Flavodoxin-like domain. Residues 11-15 (STYGH), 112-165 (IFFS…SPYG), and histidine 136 each bind FMN. Residue tyrosine 13 coordinates NAD(+).

It belongs to the WrbA family. Requires FMN as cofactor.

The catalysed reaction is a quinone + NADH + H(+) = a quinol + NAD(+). It carries out the reaction a quinone + NADPH + H(+) = a quinol + NADP(+). With respect to regulation, inhibited by dicumarol. Functionally, NAD(P)H:quinone oxidoreductase reducing quinones by a two-electron transfer mechanism. Can use either NADPH or NADH as electron donor. Can use menadione, 5-hydroxy-1,4-naphthoquinone (juglone) and 2,6-dimethoxy-p-benzoquinone (DMBQ) as substrates. Mitigates the toxicity of exogenous quinones in the rhizosphere. The protein is Quinone-oxidoreductase QR2 of Triphysaria versicolor (Yellow owl's clover).